Consider the following 209-residue polypeptide: Uracil phosphoribosyltransferase (209 aa).

5-phospho-alpha-D-ribose 1-diphosphate contacts are provided by residues R79, R104, and 131-139; that span reads DPMLATGGS. Uracil is bound by residues I194 and 199–201; that span reads GDA. Residue D200 participates in 5-phospho-alpha-D-ribose 1-diphosphate binding.

It belongs to the UPRTase family. Requires Mg(2+) as cofactor.

The enzyme catalyses UMP + diphosphate = 5-phospho-alpha-D-ribose 1-diphosphate + uracil. Its pathway is pyrimidine metabolism; UMP biosynthesis via salvage pathway; UMP from uracil: step 1/1. Allosterically activated by GTP. Functionally, catalyzes the conversion of uracil and 5-phospho-alpha-D-ribose 1-diphosphate (PRPP) to UMP and diphosphate. The protein is Uracil phosphoribosyltransferase of Streptococcus thermophilus (strain CNRZ 1066).